Reading from the N-terminus, the 241-residue chain is Leucyl/phenylalanyl-tRNA--protein transferase (241 aa).

It belongs to the L/F-transferase family.

The protein resides in the cytoplasm. It catalyses the reaction N-terminal L-lysyl-[protein] + L-leucyl-tRNA(Leu) = N-terminal L-leucyl-L-lysyl-[protein] + tRNA(Leu) + H(+). It carries out the reaction N-terminal L-arginyl-[protein] + L-leucyl-tRNA(Leu) = N-terminal L-leucyl-L-arginyl-[protein] + tRNA(Leu) + H(+). The enzyme catalyses L-phenylalanyl-tRNA(Phe) + an N-terminal L-alpha-aminoacyl-[protein] = an N-terminal L-phenylalanyl-L-alpha-aminoacyl-[protein] + tRNA(Phe). Functionally, functions in the N-end rule pathway of protein degradation where it conjugates Leu, Phe and, less efficiently, Met from aminoacyl-tRNAs to the N-termini of proteins containing an N-terminal arginine or lysine. The protein is Leucyl/phenylalanyl-tRNA--protein transferase of Neisseria meningitidis serogroup C / serotype 2a (strain ATCC 700532 / DSM 15464 / FAM18).